Reading from the N-terminus, the 657-residue chain is UvrABC system protein B (657 aa).

A Helicase ATP-binding domain is found at 25–182; that stretch reads NSIKSNNRAQ…KKLIEIQYER (158 aa). 38-45 contacts ATP; it reads GVTGSGKT. Residues 91-114 carry the Beta-hairpin motif; sequence YYDYYQPEAYVPQTDTFIEKDASI. The region spanning 429–595 is the Helicase C-terminal domain; the sequence is QIDDLYGEIN…TIIKDVRDII (167 aa). A UVR domain is found at 621-656; sequence DKLIKDLTEEMLLAAKNLQFERAAELRDIINEIKDG.

It belongs to the UvrB family. In terms of assembly, forms a heterotetramer with UvrA during the search for lesions. Interacts with UvrC in an incision complex.

The protein localises to the cytoplasm. The UvrABC repair system catalyzes the recognition and processing of DNA lesions. A damage recognition complex composed of 2 UvrA and 2 UvrB subunits scans DNA for abnormalities. Upon binding of the UvrA(2)B(2) complex to a putative damaged site, the DNA wraps around one UvrB monomer. DNA wrap is dependent on ATP binding by UvrB and probably causes local melting of the DNA helix, facilitating insertion of UvrB beta-hairpin between the DNA strands. Then UvrB probes one DNA strand for the presence of a lesion. If a lesion is found the UvrA subunits dissociate and the UvrB-DNA preincision complex is formed. This complex is subsequently bound by UvrC and the second UvrB is released. If no lesion is found, the DNA wraps around the other UvrB subunit that will check the other stand for damage. The polypeptide is UvrABC system protein B (Clostridium beijerinckii (strain ATCC 51743 / NCIMB 8052) (Clostridium acetobutylicum)).